The primary structure comprises 284 residues: 2-dehydro-3-deoxyphosphooctonate aldolase (284 aa).

Belongs to the KdsA family.

The protein resides in the cytoplasm. The enzyme catalyses D-arabinose 5-phosphate + phosphoenolpyruvate + H2O = 3-deoxy-alpha-D-manno-2-octulosonate-8-phosphate + phosphate. It participates in carbohydrate biosynthesis; 3-deoxy-D-manno-octulosonate biosynthesis; 3-deoxy-D-manno-octulosonate from D-ribulose 5-phosphate: step 2/3. Its pathway is bacterial outer membrane biogenesis; lipopolysaccharide biosynthesis. The protein is 2-dehydro-3-deoxyphosphooctonate aldolase of Proteus mirabilis (strain HI4320).